Consider the following 525-residue polypeptide: MSL complex subunit 3 (525 aa).

The region spanning 13-72 (SGEKVLCFEPDPTKARVLYDAKIIDVIIGKDEKGRKIPEYLIHFNGWNRSWDRWAAEEHV) is the Tudor-knot domain. 2 disordered regions span residues 119–148 (KEKSKNDENSVSSTCHESCGEKNGGIKEHR) and 302–383 (TTTT…DTSA). Over residues 136–146 (SCGEKNGGIKE) the composition is skewed to basic and acidic residues. An MRG domain is found at 172–521 (DERTITIDIP…CEAHYSTKNP (350 aa)). Positions 294 to 444 (FFLPIKESTT…WKLVPDNYPP (151 aa)) are required for the histone acetyltransferase activity of the MSL complex. 2 positions are modified to phosphoserine: Ser-313 and Ser-315. A compositionally biased stretch (low complexity) spans 320 to 332 (NPSTPQSTESQPP). Phosphoserine occurs at positions 371 and 404. Thr-409 carries the post-translational modification Phosphothreonine. Phosphoserine occurs at positions 411 and 415.

In terms of assembly, component of the MSL histone acetyltransferase complex at least composed of the KAT8/MOF, MSL1/hampin, MSL2 and MSL3. Interacts (via the MRG domain) with MSL1 and KAT8/MOF. As to expression, in testis, expression is mostly restricted to the spermatocyte stage and only in a small portion of spermatogonia.

The protein resides in the nucleus. Non-catalytic component of the MSL histone acetyltransferase complex, a multiprotein complex that mediates the majority of histone H4 acetylation at 'Lys-16' (H4K16ac), an epigenetic mark that prevents chromatin compaction. The MSL complex is required for chromosome stability and genome integrity by maintaining homeostatic levels of H4K16ac. The MSL complex is also involved in gene dosage by promoting up-regulation of genes expressed by the X chromosome. X up-regulation is required to compensate for autosomal biallelic expression. The MSL complex also participates in gene dosage compensation by promoting expression of Tsix non-coding RNA. Acts as a histone reader that specifically recognizes and binds histone H4 monomethylated at 'Lys-20' (H4K20Me1) in a DNA-dependent manner and is proposed to be involved in chromosomal targeting of the MSL complex. May play a role X inactivation in females. The sequence is that of MSL complex subunit 3 from Mus musculus (Mouse).